The following is a 523-amino-acid chain: Chitinase Chi52 (523 aa).

Positions 1–30 (MNQAVRFRPVITFALAFLLLITWFAPRADA) are cleaved as a signal peptide. Residues 80–101 (GSGGETPTPDTAPPSVPAGLTS) form a disordered region. One can recognise a Fibronectin type-III domain in the interval 95 to 180 (VPAGLTSSSI…TSLSVTTSNG (86 aa)). One can recognise a GH18 domain in the interval 190–513 (KWLIGYWHNF…SAHRPFLNGL (324 aa)). Catalysis depends on Glu302, which acts as the Proton donor.

It belongs to the glycosyl hydrolase 18 family. Chitinase class II subfamily.

The enzyme catalyses Random endo-hydrolysis of N-acetyl-beta-D-glucosaminide (1-&gt;4)-beta-linkages in chitin and chitodextrins.. With respect to regulation, activity is inhibited by Cu(2+) and Co(2+), and almost completely inhibited by SDS. Functionally, acidic chitinase that displays a broad substrate specificity, showing the highest specific activity toward colloidal chitin, followed by ethylene glycol chitin and ball milled chitin, but exhibits no activity toward powdery chitin and chitosan. Hydrolyzes colloidal chitin and chitooligosaccharides with degree of polymerization 2-5 to release mainly N-acetyl chitobiose. Displays inhibition effects on the growth of some phytopathogenic fungi, including Alternaria alstroemeriae, Botrytis cinerea, Rhizoctonia solani, Sclerotinia sclerotiorum and Valsa mali. The polypeptide is Chitinase Chi52 (Paenibacillus xylanexedens).